A 299-amino-acid polypeptide reads, in one-letter code: Protein sprouty homolog 4 (299 aa).

N-acetylmethionine is present on Met-1. 2 disordered regions span residues 50–79 (NDYI…PTPA) and 92–127 (FSGR…ASPR). Residues 92 to 107 (FSGRPSSVSSSSSTSS) are compositionally biased toward low complexity. Residue Ser-125 is modified to Phosphoserine. In terms of domain architecture, SPR spans 166 to 273 (KCKECASPRT…GYDRLRRPGC (108 aa)).

It belongs to the sprouty family. In terms of assembly, interacts (via C-terminus) with TESK1 (via both C- and N-termini); the interaction inhibits TESK1 kinase activity. Interacts with RAF1. Interacts with CAV1 (via C-terminus).

The protein resides in the cytoplasm. The protein localises to the cell projection. It localises to the ruffle membrane. In terms of biological role, suppresses the insulin receptor and EGFR-transduced MAPK signaling pathway, but does not inhibit MAPK activation by a constitutively active mutant Ras. Probably impairs the formation of GTP-Ras. Inhibits Ras-independent, but not Ras-dependent, activation of RAF1. Represses integrin-mediated cell spreading via inhibition of TESK1-mediated phosphorylation of cofilin. The polypeptide is Protein sprouty homolog 4 (SPRY4) (Bos taurus (Bovine)).